The sequence spans 51 residues: Mitochondrial import receptor subunit TOM5 homolog (51 aa).

Met-1 is modified (N-acetylmethionine). Lys-10 participates in a covalent cross-link: Glycyl lysine isopeptide (Lys-Gly) (interchain with G-Cter in SUMO2). Residues 27 to 45 (SIRNFLIYVALLRVTPFIL) form a helical membrane-spanning segment.

The protein belongs to the Tom5 family. As to quaternary structure, forms part of the preprotein translocase complex of the outer mitochondrial membrane (TOM complex) which consists of at least 7 different proteins (TOMM5, TOMM6, TOMM7, TOMM20, TOMM22, TOMM40 and TOMM70).

It is found in the mitochondrion outer membrane. In Bos taurus (Bovine), this protein is Mitochondrial import receptor subunit TOM5 homolog.